The chain runs to 873 residues: Valine--tRNA ligase (873 aa).

The 'HIGH' region motif lies at proline 43–histidine 53. Residues lysine 532–serine 536 carry the 'KMSKS' region motif. An ATP-binding site is contributed by lysine 535. Residues leucine 802–lysine 873 are a coiled coil.

It belongs to the class-I aminoacyl-tRNA synthetase family. ValS type 1 subfamily. In terms of assembly, monomer.

It is found in the cytoplasm. The catalysed reaction is tRNA(Val) + L-valine + ATP = L-valyl-tRNA(Val) + AMP + diphosphate. Catalyzes the attachment of valine to tRNA(Val). As ValRS can inadvertently accommodate and process structurally similar amino acids such as threonine, to avoid such errors, it has a 'posttransfer' editing activity that hydrolyzes mischarged Thr-tRNA(Val) in a tRNA-dependent manner. This Parabacteroides distasonis (strain ATCC 8503 / DSM 20701 / CIP 104284 / JCM 5825 / NCTC 11152) protein is Valine--tRNA ligase.